The primary structure comprises 518 residues: Bifunctional methyltransferase (518 aa).

The tract at residues 1 to 300 (MQYSIKQILS…SHNRVIEISP (300 aa)) is hemK. Residues 1–302 (MQYSIKQILS…NRVIEISPIN (302 aa)) are RF MTase. S-adenosyl-L-methionine contacts are provided by residues 140-144 (GTGSG), D163, W192, N207, E347, E372, N399, and D421. 207-210 (NPPY) lines the substrate pocket. The interval 301–518 (INLNRSYARR…MILQHALTDH (218 aa)) is tRNA (guanine-N(7)-)-methyltransferase. The tract at residues 305-518 (RSYARRIGKS…MILQHALTDH (214 aa)) is tRNA MTase. D421 is an active-site residue. Positions 425 and 457 each coordinate substrate.

This sequence in the C-terminal section; belongs to the class I-like SAM-binding methyltransferase superfamily. TrmB family. The protein in the N-terminal section; belongs to the protein N5-glutamine methyltransferase family. PrmC subfamily.

It carries out the reaction L-glutaminyl-[peptide chain release factor] + S-adenosyl-L-methionine = N(5)-methyl-L-glutaminyl-[peptide chain release factor] + S-adenosyl-L-homocysteine + H(+). The catalysed reaction is guanosine(46) in tRNA + S-adenosyl-L-methionine = N(7)-methylguanosine(46) in tRNA + S-adenosyl-L-homocysteine. Methylates the class 1 translation termination release factors RF1/PrfA and RF2/PrfB on the glutamine residue of the universally conserved GGQ motif. In terms of biological role, catalyzes the formation of N(7)-methylguanine at position 46 (m7G46) in tRNA. This Rickettsia prowazekii (strain Madrid E) protein is Bifunctional methyltransferase (prmC/trmB).